Reading from the N-terminus, the 222-residue chain is Adenylate kinase (222 aa).

Gly-16–Thr-21 is an ATP binding site. The interval Ala-36–Val-65 is NMP. AMP contacts are provided by residues Thr-37, Arg-42, Gly-63–Val-65, Gly-92–Arg-95, and Gln-99. The segment at Gly-133–Asp-170 is LID. Residues Arg-134 and Ser-143–Tyr-144 each bind ATP. The AMP site is built by Arg-167 and Arg-178. An ATP-binding site is contributed by Gln-206.

This sequence belongs to the adenylate kinase family. AK2 subfamily. As to quaternary structure, monomer.

It localises to the cytoplasm. Its subcellular location is the cytosol. The protein localises to the mitochondrion intermembrane space. The catalysed reaction is AMP + ATP = 2 ADP. Functionally, catalyzes the reversible transfer of the terminal phosphate group between ATP and AMP. Plays an important role in cellular energy homeostasis and in adenine nucleotide metabolism. Adenylate kinase activity is critical for regulation of the phosphate utilization and the AMP de novo biosynthesis pathways. The protein is Adenylate kinase of Candida glabrata (strain ATCC 2001 / BCRC 20586 / JCM 3761 / NBRC 0622 / NRRL Y-65 / CBS 138) (Yeast).